Reading from the N-terminus, the 318-residue chain is 2-oxoacid:ferredoxin oxidoreductase 1, subunit beta (318 aa).

Residues Cys18, Cys21, and Cys52 each contribute to the [4Fe-4S] cluster site. Residues 50–53 and His69 each bind thiamine diphosphate; that span reads IGCS. Asp94 contributes to the Mg(2+) binding site. Thiamine diphosphate is bound at residue 95 to 96; sequence GD. Mg(2+) is bound by residues Asn122 and Val124. Position 126-127 (126-127) interacts with thiamine diphosphate; it reads GL. Cys201 contacts [4Fe-4S] cluster.

As to quaternary structure, heterodimer composed of an alpha and a beta subunit. [4Fe-4S] cluster is required as a cofactor. Requires thiamine diphosphate as cofactor. It depends on Mg(2+) as a cofactor.

The enzyme catalyses a 2-oxocarboxylate + 2 oxidized [2Fe-2S]-[ferredoxin] + CoA = an acyl-CoA + 2 reduced [2Fe-2S]-[ferredoxin] + CO2 + H(+). In terms of biological role, catalyzes the coenzyme A-dependent oxidative decarboxylation of different 2-oxoacids such as pyruvate, 2-oxobutyrate and glyoxylate to form their CoA derivatives. The chain is 2-oxoacid:ferredoxin oxidoreductase 1, subunit beta from Aeropyrum pernix (strain ATCC 700893 / DSM 11879 / JCM 9820 / NBRC 100138 / K1).